A 227-amino-acid polypeptide reads, in one-letter code: MKINILTLFPRYFEVFCRESIIGKAIKQKKITINVVNFRDFSKNKHKKVDDYVYGGGPGLLLQIQPVVDALEKVGGLKIALSPQGQKFDQSVARKLAKEDEITILCGHYEGFDQRIIDNFIDFELSLGDFILTGGEIAAMAIIDAIIRLKPDIINPESLKNETFNDFLLDFPQYSRPANFRGLEVPKVLISGNHREIGEWRQEQRELITKKKRPDLWEKFLKIKNKK.

S-adenosyl-L-methionine contacts are provided by residues glycine 107 and 127–132 (LGDFIL).

This sequence belongs to the RNA methyltransferase TrmD family. In terms of assembly, homodimer.

Its subcellular location is the cytoplasm. It carries out the reaction guanosine(37) in tRNA + S-adenosyl-L-methionine = N(1)-methylguanosine(37) in tRNA + S-adenosyl-L-homocysteine + H(+). Its function is as follows. Specifically methylates guanosine-37 in various tRNAs. The protein is tRNA (guanine-N(1)-)-methyltransferase of Mesomycoplasma hyopneumoniae (strain 7448) (Mycoplasma hyopneumoniae).